Here is a 488-residue protein sequence, read N- to C-terminus: Glutamate synthase [NADPH] small chain (488 aa).

The 4Fe-4S ferredoxin-type domain occupies 38 to 69; it reads ESLRQQATRCMDCGIPFCHNGCPLGNLIPEWN.

[4Fe-4S] cluster is required as a cofactor.

It catalyses the reaction 2 L-glutamate + NADP(+) = L-glutamine + 2-oxoglutarate + NADPH + H(+). It functions in the pathway amino-acid biosynthesis; L-glutamate biosynthesis via GLT pathway; L-glutamate from 2-oxoglutarate and L-glutamine (NADP(+) route): step 1/1. This is Glutamate synthase [NADPH] small chain (gltD) from Mycobacterium tuberculosis (strain CDC 1551 / Oshkosh).